A 282-amino-acid polypeptide reads, in one-letter code: Nucleotide-binding protein in ptsN-ptsO intergenic region (282 aa).

Position 8–15 (8–15 (GRSGSGKS)) interacts with ATP. 56-59 (DVRN) is a binding site for GTP.

It belongs to the RapZ-like family.

Functionally, displays ATPase and GTPase activities. The polypeptide is Nucleotide-binding protein in ptsN-ptsO intergenic region (Shewanella violacea).